The following is a 142-amino-acid chain: Small heat shock protein IbpB (142 aa).

The sHSP domain occupies 26–137; sequence AGESQSFPPY…APQRIAISER (112 aa).

This sequence belongs to the small heat shock protein (HSP20) family. In terms of assembly, homodimer. Forms homomultimers of about 100-150 subunits at optimal growth temperatures. Conformation changes to oligomers at high temperatures or high ionic concentrations. The decrease in size of the multimers is accompanied by an increase in chaperone activity.

The protein resides in the cytoplasm. Functionally, associates with aggregated proteins, together with IbpA, to stabilize and protect them from irreversible denaturation and extensive proteolysis during heat shock and oxidative stress. Aggregated proteins bound to the IbpAB complex are more efficiently refolded and reactivated by the ATP-dependent chaperone systems ClpB and DnaK/DnaJ/GrpE. Its activity is ATP-independent. The protein is Small heat shock protein IbpB of Klebsiella pneumoniae subsp. pneumoniae (strain ATCC 700721 / MGH 78578).